Here is a 315-residue protein sequence, read N- to C-terminus: Small ribosomal subunit biogenesis GTPase RsgA (315 aa).

The CP-type G domain maps to 82–246 (DQFKSKVLAA…LIDSPGFQEF (165 aa)). Residues 130-133 (NKID) and 184-192 (GQSGMGKSS) each bind GTP. Residues cysteine 270, cysteine 275, histidine 277, and cysteine 283 each coordinate Zn(2+).

Belongs to the TRAFAC class YlqF/YawG GTPase family. RsgA subfamily. Monomer. Associates with 30S ribosomal subunit, binds 16S rRNA. Zn(2+) is required as a cofactor.

The protein localises to the cytoplasm. In terms of biological role, one of several proteins that assist in the late maturation steps of the functional core of the 30S ribosomal subunit. Helps release RbfA from mature subunits. May play a role in the assembly of ribosomal proteins into the subunit. Circularly permuted GTPase that catalyzes slow GTP hydrolysis, GTPase activity is stimulated by the 30S ribosomal subunit. The sequence is that of Small ribosomal subunit biogenesis GTPase RsgA from Ralstonia pickettii (strain 12J).